The primary structure comprises 467 residues: tRNA-2-methylthio-N(6)-dimethylallyladenosine synthase (467 aa).

The MTTase N-terminal domain maps to 4 to 124 (RKLFIKSYGC…LPEMVAKVER (121 aa)). The [4Fe-4S] cluster site is built by Cys13, Cys49, Cys87, Cys161, Cys165, and Cys168. Positions 147 to 379 (QAHGPSAFLS…QARLVEIQQA (233 aa)) constitute a Radical SAM core domain. One can recognise a TRAM domain in the interval 382–444 (QACVGRPMDV…SNSLAARLVE (63 aa)).

This sequence belongs to the methylthiotransferase family. MiaB subfamily. As to quaternary structure, monomer. Requires [4Fe-4S] cluster as cofactor.

It is found in the cytoplasm. The enzyme catalyses N(6)-dimethylallyladenosine(37) in tRNA + (sulfur carrier)-SH + AH2 + 2 S-adenosyl-L-methionine = 2-methylsulfanyl-N(6)-dimethylallyladenosine(37) in tRNA + (sulfur carrier)-H + 5'-deoxyadenosine + L-methionine + A + S-adenosyl-L-homocysteine + 2 H(+). Functionally, catalyzes the methylthiolation of N6-(dimethylallyl)adenosine (i(6)A), leading to the formation of 2-methylthio-N6-(dimethylallyl)adenosine (ms(2)i(6)A) at position 37 in tRNAs that read codons beginning with uridine. The protein is tRNA-2-methylthio-N(6)-dimethylallyladenosine synthase of Rhodospirillum rubrum (strain ATCC 11170 / ATH 1.1.1 / DSM 467 / LMG 4362 / NCIMB 8255 / S1).